The sequence spans 444 residues: Homogentisate 1,2-dioxygenase (444 aa).

The active-site Proton acceptor is the His-298. His-341 and Glu-347 together coordinate Fe cation. Residues Tyr-356 and His-377 each contribute to the homogentisate site. His-377 contacts Fe cation.

The protein belongs to the homogentisate dioxygenase family. In terms of assembly, hexamer; dimer of trimers. It depends on Fe cation as a cofactor.

It carries out the reaction homogentisate + O2 = 4-maleylacetoacetate + H(+). It functions in the pathway amino-acid degradation; L-phenylalanine degradation; acetoacetate and fumarate from L-phenylalanine: step 4/6. In terms of biological role, involved in the catabolism of homogentisate (2,5-dihydroxyphenylacetate or 2,5-OH-PhAc), a central intermediate in the degradation of phenylalanine and tyrosine. Catalyzes the oxidative ring cleavage of the aromatic ring of homogentisate to yield maleylacetoacetate. This Burkholderia ambifaria (strain MC40-6) protein is Homogentisate 1,2-dioxygenase.